Consider the following 334-residue polypeptide: Testis-specific Y-encoded protein 1 (334 aa).

Residue S4 is modified to Phosphoserine. Disordered regions lie at residues 27 to 46 (LEGE…PAGD) and 96 to 146 (NEGE…AERR). Composition is skewed to basic and acidic residues over residues 96-108 (NEGE…KQEG) and 115-128 (ELEK…DSKD).

The protein belongs to the nucleosome assembly protein (NAP) family. Phosphorylated. Testis.

The protein localises to the cytoplasm. Its subcellular location is the nucleus. Functionally, may be involved in sperm differentiation and proliferation. This Rattus norvegicus (Rat) protein is Testis-specific Y-encoded protein 1 (Tspy1).